Reading from the N-terminus, the 375-residue chain is Putative F-box only protein 11 (375 aa).

Positions 1–46 (MVSVNLPWELVEEILCRVPPQSLVKFRTVCKQWNSLFDDNKFVNDH) constitute an F-box domain.

This is Putative F-box only protein 11 (FBX11) from Arabidopsis thaliana (Mouse-ear cress).